A 444-amino-acid polypeptide reads, in one-letter code: Acyl-CoA 6-desaturase (444 aa).

At methionine 1–histidine 130 the chain is on the cytoplasmic side. The region spanning methionine 18–alanine 95 is the Cytochrome b5 heme-binding domain. Residues leucine 131 to leucine 151 traverse the membrane as a helical segment. Over serine 152 to glycine 157 the chain is Lumenal. The chain crosses the membrane as a helical span at residues tryptophan 158–leucine 178. At glutamine 179 to glutamate 264 the chain is on the cytoplasmic side. The short motif at histidine 180 to histidine 184 is the Histidine box-1 element. The Histidine box-2 motif lies at histidine 217–histidine 221. A helical transmembrane segment spans residues tyrosine 265–methionine 285. Topologically, residues threonine 286–arginine 305 are lumenal. Residues phenylalanine 306–isoleucine 326 traverse the membrane as a helical segment. The Cytoplasmic segment spans residues arginine 327–lysine 444. Positions glutamine 382–histidine 386 match the Histidine box-3 motif.

Belongs to the fatty acid desaturase type 1 family. Expressed in the liver and brain (at protein level). Highest activity is found in the liver and adrenals followed by the testes and other organs, absent in adipose tissue.

It localises to the endoplasmic reticulum membrane. Its subcellular location is the microsome membrane. The catalysed reaction is (9Z,12Z)-octadecadienoyl-CoA + 2 Fe(II)-[cytochrome b5] + O2 + 2 H(+) = (6Z,9Z,12Z)-octadecatrienoyl-CoA + 2 Fe(III)-[cytochrome b5] + 2 H2O. It carries out the reaction (9Z,12Z,15Z)-octadecatrienoyl-CoA + 2 Fe(II)-[cytochrome b5] + O2 + 2 H(+) = (6Z,9Z,12Z,15Z)-octadecatetraenoyl-CoA + 2 Fe(III)-[cytochrome b5] + 2 H2O. It catalyses the reaction (9Z,12Z,15Z,18Z,21Z)-tetracosapentaenoyl-CoA + 2 Fe(II)-[cytochrome b5] + O2 + 2 H(+) = (6Z,9Z,12Z,15Z,18Z,21Z)-tetracosahexaenoyl-CoA + 2 Fe(III)-[cytochrome b5] + 2 H2O. The enzyme catalyses (11E)-octadecenoyl-CoA + 2 Fe(II)-[cytochrome b5] + O2 + 2 H(+) = (6Z,11E)-octadecadienoyl-CoA + 2 Fe(III)-[cytochrome b5] + 2 H2O. The catalysed reaction is (11Z,14Z)-eicosadienoyl-CoA + 2 Fe(II)-[cytochrome b5] + O2 + 2 H(+) = (8Z,11Z,14Z)-eicosatrienoyl-CoA + 2 Fe(III)-[cytochrome b5] + 2 H2O. It carries out the reaction (11Z,14Z,17Z)-eicosatrienoyl-CoA + 2 Fe(II)-[cytochrome b5] + O2 + 2 H(+) = (8Z,11Z,14Z,17Z)-eicosatetraenoyl-CoA + 2 Fe(III)-[cytochrome b5] + 2 H2O. Its pathway is lipid metabolism; polyunsaturated fatty acid biosynthesis. In terms of biological role, involved in the biosynthesis of highly unsaturated fatty acids (HUFA) from the essential polyunsaturated fatty acids (PUFA) linoleic acid (LA) (18:2n-6) and alpha-linolenic acid (ALA) (18:3n-3) precursors, acting as a fatty acyl-coenzyme A (CoA) desaturase that introduces a cis double bond at carbon 6 of the fatty acyl chain. Catalyzes the first and rate limiting step in this pathway which is the desaturation of LA (18:2n-6) and ALA (18:3n-3) into gamma-linoleate (GLA) (18:3n-6) and stearidonate (18:4n-3), respectively. Subsequently, in the biosynthetic pathway of HUFA n-3 series, it desaturates tetracosapentaenoate (24:5n-3) to tetracosahexaenoate (24:6n-3), which is then converted to docosahexaenoate (DHA)(22:6n-3), an important lipid for nervous system function. It can also desaturate (11E)-octadecenoate (trans-vaccenoate) at carbon 6 generating (6Z,11E)-octadecadienoate. In addition to Delta-6 activity, this enzyme exhibits Delta-8 activity with slight biases toward n-3 fatty acyl-CoA substrates. This Rattus norvegicus (Rat) protein is Acyl-CoA 6-desaturase (Fads2).